The primary structure comprises 375 residues: MMSKPHHATLESIKYTPGSLRLLDQRKLPLETVFDDVLTVEDIWSAINEMRVRGAPAIAVSAALGIAVATQRKVANGELKSGSEVQAFFLSSCDFVMTSRPTAVNLFNCLRDLKEQVEKLDPTKAAAEVAQACVELAEAVYTKDVAFNEGIMRHGAAHILAVAKAEGRDKVSILTICNTGALATSRYGTALGVVRQLFYDGKLERVYACETRPWNQGARLTVYECVQEGIPCTLICDGAASSLMLNRKIDAVVVGADRICQNGDTANKIGTYNLAVSAKFHGVKLYVAAPSTTLDAKTASGNRVEIEEREPTEITTNMVTKQRVVADGPHLSVWNPVFDITPGELITGGIITEKGVQAPTASAPYYDIASIIAQP.

The active-site Proton donor is aspartate 257.

Belongs to the eIF-2B alpha/beta/delta subunits family. MtnA subfamily.

It is found in the cytoplasm. The protein resides in the nucleus. The catalysed reaction is 5-(methylsulfanyl)-alpha-D-ribose 1-phosphate = 5-(methylsulfanyl)-D-ribulose 1-phosphate. The protein operates within amino-acid biosynthesis; L-methionine biosynthesis via salvage pathway; L-methionine from S-methyl-5-thio-alpha-D-ribose 1-phosphate: step 1/6. Catalyzes the interconversion of methylthioribose-1-phosphate (MTR-1-P) into methylthioribulose-1-phosphate (MTRu-1-P). The chain is Methylthioribose-1-phosphate isomerase from Leishmania infantum.